Here is a 136-residue protein sequence, read N- to C-terminus: Ciliary microtubule inner protein 1 (136 aa).

The protein localises to the cell projection. It localises to the cilium. In Mus musculus (Mouse), this protein is Ciliary microtubule inner protein 1 (Cimip1).